We begin with the raw amino-acid sequence, 178 residues long: Putative pre-16S rRNA nuclease (178 aa).

Positions 1–18 are enriched in basic and acidic residues; the sequence is MDHAEQGPDRPGVDDPGR. Positions 1–21 are disordered; the sequence is MDHAEQGPDRPGVDDPGRGRR.

It belongs to the YqgF nuclease family.

Its subcellular location is the cytoplasm. Functionally, could be a nuclease involved in processing of the 5'-end of pre-16S rRNA. The chain is Putative pre-16S rRNA nuclease from Rhodococcus jostii (strain RHA1).